A 304-amino-acid chain; its full sequence is Aspartate carbamoyltransferase catalytic subunit (304 aa).

2 residues coordinate carbamoyl phosphate: R49 and T50. K77 serves as a coordination point for L-aspartate. Carbamoyl phosphate is bound by residues R99, H127, and Q130. Positions 160 and 211 each coordinate L-aspartate. A252 and P253 together coordinate carbamoyl phosphate.

The protein belongs to the aspartate/ornithine carbamoyltransferase superfamily. ATCase family. In terms of assembly, heterododecamer (2C3:3R2) of six catalytic PyrB chains organized as two trimers (C3), and six regulatory PyrI chains organized as three dimers (R2).

The catalysed reaction is carbamoyl phosphate + L-aspartate = N-carbamoyl-L-aspartate + phosphate + H(+). It participates in pyrimidine metabolism; UMP biosynthesis via de novo pathway; (S)-dihydroorotate from bicarbonate: step 2/3. Catalyzes the condensation of carbamoyl phosphate and aspartate to form carbamoyl aspartate and inorganic phosphate, the committed step in the de novo pyrimidine nucleotide biosynthesis pathway. The protein is Aspartate carbamoyltransferase catalytic subunit of Bacillus cytotoxicus (strain DSM 22905 / CIP 110041 / 391-98 / NVH 391-98).